Here is a 703-residue protein sequence, read N- to C-terminus: Calpain-8 (703 aa).

In terms of domain architecture, Calpain catalytic spans 45–344; the sequence is LFKDPEFPAC…YSRLEICNLS (300 aa). Residues C105, H262, and N286 contribute to the active site. The domain III stretch occupies residues 355–512; it reads KWNLVLFNGR…VFSEKKAKAL (158 aa). Positions 513 to 531 are linker; sequence EIGDTVSGHPHEPHPRDMD. EF-hand domains lie at 532–566, 575–608, 605–640, and 670–703; these read EEDE…VLSK, FNIN…LKIR, LKIR…AGFT, and IRLE…CVLV. The segment at 532-703 is domain IV; that stretch reads EEDEHVRSLF…LAEWLCCVLV (172 aa). Positions 588, 590, 592, 594, 599, 618, 620, 624, and 629 each coordinate Ca(2+).

Belongs to the peptidase C2 family. In terms of assembly, monomer and homooligomer. Interacts with COPS1/GPS1, COPB1, EYA2, NME2, NME4 and TOMM70. Requires Ca(2+) as cofactor. Post-translationally, undergoes autolytic cleavage between Ala-5 and Ala-6 which gives rise to fragments extending from Ala-6 to the C-terminus, Ala-6 to the EF-hand 2 domain and from Ala-6 to the beginning of domain III. Predominantly expressed in the stomach. Localizes strictly to the surface mucus cells in the gastric epithelium and the mucus-secreting goblet cells in the duodenum. Detected in the pituitary after estrogen stimulation.

The protein resides in the cytoplasm. It is found in the golgi apparatus. The enzyme catalyses Broad endopeptidase specificity.. Functionally, calcium-regulated non-lysosomal thiol-protease. Involved in membrane trafficking in the gastric surface mucus cells (pit cells) and may involve the membrane trafficking of mucus cells via interactions with coat protein. Proteolytically cleaves the beta-subunit of coatomer complex. This chain is Calpain-8 (Capn8), found in Rattus norvegicus (Rat).